The sequence spans 436 residues: Ribosomal protein uS12 methylthiotransferase RimO (436 aa).

An MTTase N-terminal domain is found at R2–K117. [4Fe-4S] cluster contacts are provided by C11, C47, C80, C154, C158, and C161. Residues T140 to E369 enclose the Radical SAM core domain. One can recognise a TRAM domain in the interval M372–Y436.

It belongs to the methylthiotransferase family. RimO subfamily. It depends on [4Fe-4S] cluster as a cofactor.

It localises to the cytoplasm. It catalyses the reaction L-aspartate(89)-[ribosomal protein uS12]-hydrogen + (sulfur carrier)-SH + AH2 + 2 S-adenosyl-L-methionine = 3-methylsulfanyl-L-aspartate(89)-[ribosomal protein uS12]-hydrogen + (sulfur carrier)-H + 5'-deoxyadenosine + L-methionine + A + S-adenosyl-L-homocysteine + 2 H(+). Catalyzes the methylthiolation of an aspartic acid residue of ribosomal protein uS12. This Caldanaerobacter subterraneus subsp. tengcongensis (strain DSM 15242 / JCM 11007 / NBRC 100824 / MB4) (Thermoanaerobacter tengcongensis) protein is Ribosomal protein uS12 methylthiotransferase RimO.